Here is a 300-residue protein sequence, read N- to C-terminus: Putative S-adenosyl-L-methionine-dependent methyltransferase MMAR_1058 (300 aa).

S-adenosyl-L-methionine contacts are provided by residues Asp127 and 156-157 (DL).

Belongs to the UPF0677 family.

Exhibits S-adenosyl-L-methionine-dependent methyltransferase activity. This is Putative S-adenosyl-L-methionine-dependent methyltransferase MMAR_1058 from Mycobacterium marinum (strain ATCC BAA-535 / M).